The following is a 619-amino-acid chain: TBC domain-containing protein C1952.17c (619 aa).

One can recognise a Rab-GAP TBC domain in the interval 34 to 387 (PDEYSLRAKA…RLWDSIIADQ (354 aa)).

The protein localises to the cytoplasm. Its function is as follows. May act as a GTPase-activating protein for Rab family protein(s). In Schizosaccharomyces pombe (strain 972 / ATCC 24843) (Fission yeast), this protein is TBC domain-containing protein C1952.17c.